Here is a 185-residue protein sequence, read N- to C-terminus: Ribosome-recycling factor (185 aa).

Belongs to the RRF family.

The protein localises to the cytoplasm. In terms of biological role, responsible for the release of ribosomes from messenger RNA at the termination of protein biosynthesis. May increase the efficiency of translation by recycling ribosomes from one round of translation to another. This chain is Ribosome-recycling factor, found in Mycobacterium bovis (strain BCG / Pasteur 1173P2).